We begin with the raw amino-acid sequence, 289 residues long: DNA repair protein rad14 (289 aa).

Residues C116, C119, C137, and C140 each contribute to the Zn(2+) site. A zinc finger lies at 116–140; it reads CFECDSIELDTKYFDIFHCRVCHTC.

This sequence belongs to the XPA family. As to quaternary structure, interacts with hrq1.

Its subcellular location is the nucleus. Involved in nucleotide excision repair (NER). Functional in repair of ultraviolet radiation induced damages and in mitotic mutation avoidance. Binds damaged DNA. Binds specifically to base-base mismatches or small insertion/deletion loops with unpaired nucleotides. Maintains GT repeat stability. Functions as a part of the short-patch excision repair system. This is DNA repair protein rad14 from Schizosaccharomyces pombe (strain 972 / ATCC 24843) (Fission yeast).